Here is a 400-residue protein sequence, read N- to C-terminus: Subtilisin-like protease CPC735_013700 (400 aa).

The signal sequence occupies residues 1 to 19; sequence MGFVKILSLSLAATAVADA. A propeptide spanning residues 20 to 116 is cleaved from the precursor; sequence ATILSPRYPN…IEPNQIVTIS (97 aa). In terms of domain architecture, Inhibitor I9 spans 36–115; it reads YIVVMKDGVS…FIEPNQIVTI (80 aa). The Peptidase S8 domain maps to 126–400; the sequence is SWGLPRISVK…RKLLYNNSGK (275 aa). Residues Asp161 and His192 each act as charge relay system in the active site. Asn252 carries an N-linked (GlcNAc...) asparagine glycan. The Charge relay system role is filled by Ser346. Asn396 carries N-linked (GlcNAc...) asparagine glycosylation.

This sequence belongs to the peptidase S8 family.

Its subcellular location is the secreted. In terms of biological role, secreted subtilisin-like serine protease with keratinolytic activity that contributes to pathogenicity. This chain is Subtilisin-like protease CPC735_013700, found in Coccidioides posadasii (strain C735) (Valley fever fungus).